Reading from the N-terminus, the 236-residue chain is Endonuclease V (236 aa).

Positions 47 and 115 each coordinate Mg(2+).

The protein belongs to the endonuclease V family. The cofactor is Mg(2+).

It localises to the cytoplasm. It carries out the reaction Endonucleolytic cleavage at apurinic or apyrimidinic sites to products with a 5'-phosphate.. Its function is as follows. DNA repair enzyme involved in the repair of deaminated bases. Selectively cleaves double-stranded DNA at the second phosphodiester bond 3' to a deoxyinosine leaving behind the intact lesion on the nicked DNA. This Xanthomonas campestris pv. campestris (strain B100) protein is Endonuclease V.